The following is a 420-amino-acid chain: 3-isopropylmalate dehydratase large subunit (420 aa).

Residues Cys-300, Cys-360, and Cys-363 each contribute to the [4Fe-4S] cluster site.

The protein belongs to the aconitase/IPM isomerase family. LeuC type 2 subfamily. Heterodimer of LeuC and LeuD. It depends on [4Fe-4S] cluster as a cofactor.

The enzyme catalyses (2R,3S)-3-isopropylmalate = (2S)-2-isopropylmalate. It participates in amino-acid biosynthesis; L-leucine biosynthesis; L-leucine from 3-methyl-2-oxobutanoate: step 2/4. Catalyzes the isomerization between 2-isopropylmalate and 3-isopropylmalate, via the formation of 2-isopropylmaleate. The chain is 3-isopropylmalate dehydratase large subunit from Helicobacter hepaticus (strain ATCC 51449 / 3B1).